Here is a 443-residue protein sequence, read N- to C-terminus: Probable D-serine dehydratase (443 aa).

N6-(pyridoxal phosphate)lysine is present on Lys-118.

The protein belongs to the serine/threonine dehydratase family. DsdA subfamily. The cofactor is pyridoxal 5'-phosphate.

It carries out the reaction D-serine = pyruvate + NH4(+). This Aeromonas salmonicida (strain A449) protein is Probable D-serine dehydratase.